A 309-amino-acid polypeptide reads, in one-letter code: Probable manganese-dependent inorganic pyrophosphatase (309 aa).

Mn(2+) is bound by residues His9, Asp13, Asp15, Asp75, His97, and Asp149.

This sequence belongs to the PPase class C family. Mn(2+) is required as a cofactor.

Its subcellular location is the cytoplasm. It carries out the reaction diphosphate + H2O = 2 phosphate + H(+). The polypeptide is Probable manganese-dependent inorganic pyrophosphatase (Bacillus cereus (strain ATCC 10987 / NRS 248)).